Consider the following 458-residue polypeptide: MERSLKNVLVVSCGFLLLFTAYGGLQNLQSSLYSEQGLGVATLSTLYASVLLSSMFLPPILIKKCGCKWTIVGSMCCYVVFSLGNFHANWYTLIPTSILLGLGAAPLWSAQGTYLTTMGNLQAEKVGKLGKDVVNQYFGIFFLVFQSSGVWGNLISSLVFGKMSMQEAIPEEQLMSCGAKDCLMGPAATNSTHHPSQQLIYTLLGIYTGCGVLAILLVAVFLESLEDKLENEGERRPRPPPLWSTLLSTFMLFRDKRLCLLMFLPLYSGFQQEFLSGEYTKSYVTCALGIHFVGYVMICFSAMTALCSLLYGKISKYTGRAALYALGAAIHFSCIVVFLLWHPNTNQLPVFFVLSGLWGMSDAVWQTQNNALFGVLFEENKEPAFANYRLGEAIGFVIAFGYSSFLCVSTKLYILLGVLSLAMVGYGTVEYLEVKAASKVLGAEKKNQAEEEEMKTKI.

The next 5 helical transmembrane spans lie at 8-28, 42-62, 69-89, 90-110, and 140-160; these read VLVVSCGFLLLFTAYGGLQNL, TLSTLYASVLLSSMFLPPILI, WTIVGSMCCYVVFSLGNFHAN, WYTLIPTSILLGLGAAPLWSA, and IFFLVFQSSGVWGNLISSLVF. Asparagine 190 carries an N-linked (GlcNAc...) asparagine glycan. 7 consecutive transmembrane segments (helical) span residues 202-222, 258-275, 286-306, 321-341, 345-365, 390-410, and 412-432; these read TLLGIYTGCGVLAILLVAVFL, LCLLMFLPLYSGFQQEFL, CALGIHFVGYVMICFSAMTAL, AALYALGAAIHFSCIVVFLLW, TNQLPVFFVLSGLWGMSDAVW, LGEAIGFVIAFGYSSFLCVST, and LYILLGVLSLAMVGYGTVEYL.

The protein belongs to the unc-93 family.

Its subcellular location is the cell membrane. The chain is Protein unc-93 homolog A (Unc93a) from Mus musculus (Mouse).